We begin with the raw amino-acid sequence, 1153 residues long: Error-prone DNA polymerase (1153 aa).

Disordered regions lie at residues 1–39 (MFYS…QAQP) and 64–89 (VGEG…GASQ).

This sequence belongs to the DNA polymerase type-C family. DnaE2 subfamily.

It localises to the cytoplasm. The catalysed reaction is DNA(n) + a 2'-deoxyribonucleoside 5'-triphosphate = DNA(n+1) + diphosphate. DNA polymerase involved in damage-induced mutagenesis and translesion synthesis (TLS). It is not the major replicative DNA polymerase. The chain is Error-prone DNA polymerase from Corynebacterium jeikeium (strain K411).